The primary structure comprises 229 residues: Ribonuclease 3 (229 aa).

In terms of domain architecture, RNase III spans 5-127 (LSRLERQLGY…LIGAIYLDAG (123 aa)). Glu40 lines the Mg(2+) pocket. Asp44 is an active-site residue. Mg(2+) is bound by residues Asp113 and Glu116. Residue Glu116 is part of the active site. One can recognise a DRBM domain in the interval 154 to 224 (DPKTRLQEFL…AAAALIALGV (71 aa)).

Belongs to the ribonuclease III family. Homodimer. Requires Mg(2+) as cofactor.

Its subcellular location is the cytoplasm. It catalyses the reaction Endonucleolytic cleavage to 5'-phosphomonoester.. In terms of biological role, digests double-stranded RNA. Involved in the processing of primary rRNA transcript to yield the immediate precursors to the large and small rRNAs (23S and 16S). Processes some mRNAs, and tRNAs when they are encoded in the rRNA operon. Processes pre-crRNA and tracrRNA of type II CRISPR loci if present in the organism. This chain is Ribonuclease 3, found in Pseudomonas fluorescens (strain ATCC BAA-477 / NRRL B-23932 / Pf-5).